The sequence spans 198 residues: Zinc finger protein 41 (198 aa).

The span at 1 to 12 shows a compositional bias: basic residues; it reads MEKPATRKKKSQ. Residues 1-56 form a disordered region; sequence MEKPATRKKKSQAPKEEAGAQKATVKGEKTSKGKKATKKPRKPRRPRKEPVLSPED. The segment covering 13–31 has biased composition (basic and acidic residues); sequence APKEEAGAQKATVKGEKTS. A compositionally biased stretch (basic residues) spans 32-47; sequence KGKKATKKPRKPRRPR. 4 C2H2-type zinc fingers span residues 87-109, 115-137, 143-165, and 171-193; these read YECGECGRIFKHKTDHIRHQRVH, FKCDQCGKTFRHSSDVTKHQRIH, FKCGECGKAFNCGSNLLKHQKTH, and YGCEECGKSFAYSSCLIRHRKRH.

It belongs to the krueppel C2H2-type zinc-finger protein family. As to expression, predominantly in the spermatocytes and spermatids of testes. It is also expressed in the fetus and embryonic stem cells at lower levels.

The protein localises to the nucleus. Its function is as follows. A putative DNA-binding regulatory protein associated with meiosis in spermatogenesis. This chain is Zinc finger protein 41 (Zfp41), found in Mus musculus (Mouse).